The primary structure comprises 479 residues: Ammonium transporter Rh type C (479 aa).

Topologically, residues 1-9 (MAWNTNLRW) are cytoplasmic. A helical transmembrane segment spans residues 10 to 30 (RLPLTCLLLQVAMVILFGVFV). The Extracellular segment spans residues 31 to 60 (RYDFDADAHWWTERKHKNLSEVENEFYYRY). An N-linked (GlcNAc...) asparagine glycan is attached at asparagine 48. A helical transmembrane segment spans residues 61 to 81 (PSFQDVHVMVFVGFGFLMTFL). The Cytoplasmic portion of the chain corresponds to 82–85 (QRYG). The chain crosses the membrane as a helical span at residues 86–106 (FSAVGFNFLLAAFGIQWALLM). The Extracellular portion of the chain corresponds to 107–123 (QGWFHFLEGRYIVVGVE). The chain crosses the membrane as a helical span at residues 124 to 144 (NLINADFCVASVCVAFGAVLG). Residues 145-148 (KVSP) are Cytoplasmic-facing. A helical membrane pass occupies residues 149–169 (IQLLIMTFFQVTLFAVNEFIL). Topologically, residues 170–177 (LNLLKVKD) are extracellular. The chain crosses the membrane as a helical span at residues 178–200 (AGGSMTIHTFYAYFELTVTRILY). Topologically, residues 201–218 (RRNLEQSKERQSSAYQSD) are cytoplasmic. A helical membrane pass occupies residues 219–239 (LFAMIGTLFLWMYWPSFNSAI). Topologically, residues 240-250 (SYHGDSQHRAA) are extracellular. The chain crosses the membrane as a helical span at residues 251–271 (INTYCSLAACVLTSVAVSSAL). Residues 272–281 (HKKGKLDMVH) are Cytoplasmic-facing. Residues 282–302 (IQNATLAGGVAVGTTAEMMLM) form a helical membrane-spanning segment. Proline 303 is a topological domain (extracellular). A helical membrane pass occupies residues 304–324 (YGALIIGFICGIISTLGFVYL). Topologically, residues 325–345 (TPFLESRLHIQDTCGINNLHG) are cytoplasmic. A helical membrane pass occupies residues 346 to 366 (IPGIIGGIVGAVTAASASLEV). Residues 367–394 (YGKEGLVHSFDFQDFKRDWTARTQGKFQ) are Extracellular-facing. Residues 395 to 415 (IYGLLVTLAMALMGGIIVGLI) form a helical membrane-spanning segment. Over 416-479 (LRLPFWGQPS…PMASSVPLVP (64 aa)) the chain is Cytoplasmic.

Belongs to the ammonium transporter (TC 2.A.49) family. Rh subfamily. Homotrimer. Post-translationally, N-glycosylated.

Its subcellular location is the apical cell membrane. The catalysed reaction is NH4(+)(in) = NH4(+)(out). It catalyses the reaction methylamine(out) = methylamine(in). It carries out the reaction CO2(out) = CO2(in). In terms of biological role, ammonium transporter involved in the maintenance of acid-base homeostasis. Transports ammonium and its related derivative methylammonium across the plasma membrane of epithelial cells likely contributing to renal transepithelial ammonia transport and ammonia metabolism. Postulated to primarily mediate an electroneutral bidirectional transport of NH3 ammonia species according to a mechanism that implies interaction of an NH4(+) ion with acidic residues of the pore entry followed by dissociation of NH4(+) into NH3 and H(+). As a result NH3 transits through the central pore and is protonated on the extracellular side reforming NH4(+). May act as a CO2 channel providing for renal acid secretion. In Macaca mulatta (Rhesus macaque), this protein is Ammonium transporter Rh type C (RHCG).